Consider the following 80-residue polypeptide: Keratin-associated protein 6-1 (80 aa).

This sequence belongs to the KRTAP type 6 family. In terms of assembly, interacts with hair keratins.

In the hair cortex, hair keratin intermediate filaments are embedded in an interfilamentous matrix, consisting of hair keratin-associated proteins (KRTAP), which are essential for the formation of a rigid and resistant hair shaft through their extensive disulfide bond cross-linking with abundant cysteine residues of hair keratins. The matrix proteins include the high-sulfur and high-glycine-tyrosine keratins. The sequence is that of Keratin-associated protein 6-1 (KRTAP6-1) from Oryctolagus cuniculus (Rabbit).